A 274-amino-acid polypeptide reads, in one-letter code: tRNA-cytidine(32) 2-sulfurtransferase (274 aa).

Positions 40–45 match the PP-loop motif motif; that stretch reads SGGKDS. [4Fe-4S] cluster-binding residues include Cys115, Cys118, and Cys206.

Belongs to the TtcA family. Homodimer. Mg(2+) is required as a cofactor. The cofactor is [4Fe-4S] cluster.

It is found in the cytoplasm. The enzyme catalyses cytidine(32) in tRNA + S-sulfanyl-L-cysteinyl-[cysteine desulfurase] + AH2 + ATP = 2-thiocytidine(32) in tRNA + L-cysteinyl-[cysteine desulfurase] + A + AMP + diphosphate + H(+). Its pathway is tRNA modification. In terms of biological role, catalyzes the ATP-dependent 2-thiolation of cytidine in position 32 of tRNA, to form 2-thiocytidine (s(2)C32). The sulfur atoms are provided by the cysteine/cysteine desulfurase (IscS) system. In Pseudomonas putida (strain GB-1), this protein is tRNA-cytidine(32) 2-sulfurtransferase.